Reading from the N-terminus, the 915-residue chain is Alanine--tRNA ligase (915 aa).

The Zn(2+) site is built by H605, H609, C709, and H713. Positions 882–901 are disordered; it reads GGGGDERLAQGGGRNPDGLT.

This sequence belongs to the class-II aminoacyl-tRNA synthetase family. It depends on Zn(2+) as a cofactor.

It localises to the cytoplasm. The catalysed reaction is tRNA(Ala) + L-alanine + ATP = L-alanyl-tRNA(Ala) + AMP + diphosphate. In terms of biological role, catalyzes the attachment of alanine to tRNA(Ala) in a two-step reaction: alanine is first activated by ATP to form Ala-AMP and then transferred to the acceptor end of tRNA(Ala). Also edits incorrectly charged Ser-tRNA(Ala) and Gly-tRNA(Ala) via its editing domain. The chain is Alanine--tRNA ligase from Methanopyrus kandleri (strain AV19 / DSM 6324 / JCM 9639 / NBRC 100938).